Consider the following 72-residue polypeptide: UPF0352 protein NTHI1007 (72 aa).

The protein belongs to the UPF0352 family.

The protein is UPF0352 protein NTHI1007 of Haemophilus influenzae (strain 86-028NP).